Here is a 561-residue protein sequence, read N- to C-terminus: Reductase FVEG_12641 (561 aa).

Residues 1–26 (MGVQSTANLPKETVSHLDTAPTPKPG) are disordered. The MOSC domain occupies 52–189 (QQHDGPVFCS…ICKGDTISLL (138 aa)). Positions 237–342 (SAPKTYTLVD…PGSNPGAMEN (106 aa)) constitute an FAD-binding FR-type domain. Residues 288 to 289 (FE), 305 to 307 (GVS), 313 to 316 (RGGS), and T362 each bind FMN. A 2Fe-2S ferredoxin-type domain is found at 474-561 (FEVEVDEPDS…GIGRLRIEID (88 aa)). C512 lines the [2Fe-2S] cluster pocket. FMN is bound at residue S514. [2Fe-2S] cluster-binding residues include C517, C520, and C548.

This sequence belongs to the PDR/VanB family. In terms of assembly, monomer. It depends on FMN as a cofactor.

Reductase; part of the Fusarium detoxification of benzoxazolinone cluster 2 (FDB2) involved in the degradation of benzoxazolinones produced by the host plant. Maize, wheat, and rye produce the 2 benzoxazinone phytoanticipins 2,4-dihy-droxy-7-methoxy-1,4-benzoxazin-3-one (DIMBOA) and 2,4-dihydroxy-1,4-benzoxazin-3-one (DIBOA) that, due to their inherent instability once released, spontaneously degrade to the more stable corresponding benzoxazolinones, 6-methoxy-2-benzoxazolinone (MBOA) and 2-benzoxazolinone (BOA), respectively. The first step in the detoxification of benzoxazolinones involves the hydrolysis of the cyclic ester bond of benzoxazolinones by the FDB1 cluster gamma-lactamase MBL1 to aminophenols. MBL1 is able to convert BOA into 2-aminophenol (2-AP), as well as MBOA into 5-methoxy-2-aminophenol (2-AMP). The FDB2 cluster N-malonyltransferase FDB2/NAT1 then metabolizes aminophenols via N-malonylation to non-toxic malonamic acids. FDB2/NAT1 converts 2-AP into N-(2-hydroxyphenyl) malonamic acid (HPMA) and 2-AMP into N-(2-hydroxy-4-methoxyphenyl) malonamic acid (HMPMA). The duplicated dienlactone hydrolases DLH1 and DLH2 may provide redundant function for hydrolyzing the lactone moiety in the BOA molecule. The roles of the amidases an other enzymes encoded by the 2 FDB clusters have not been identified so far. The protein is Reductase FVEG_12641 of Gibberella moniliformis (strain M3125 / FGSC 7600) (Maize ear and stalk rot fungus).